The following is an 84-amino-acid chain: uncharacterized protein (84 aa).

This is an uncharacterized protein from Methanocaldococcus jannaschii (strain ATCC 43067 / DSM 2661 / JAL-1 / JCM 10045 / NBRC 100440) (Methanococcus jannaschii).